The sequence spans 481 residues: NADH-quinone oxidoreductase subunit N (481 aa).

Helical transmembrane passes span 11–31 (AYPE…DLFA), 37–57 (YLAF…TCGI), 74–94 (AMSD…LIYS), 103–123 (LLKG…MVMV), 128–148 (LITL…MVAL), 162–182 (FFVL…MLYG), 205–225 (IFII…SAVP), 238–258 (PTAV…GFVM), 272–292 (WQGM…IAAI), 300–320 (MLAY…IAAG), 328–348 (MFYV…IMLV), 371–391 (LAFM…MIGF), 405–425 (GYIW…FYYL), and 457–477 (LAII…LSAI).

Belongs to the complex I subunit 2 family. As to quaternary structure, NDH-1 is composed of 14 different subunits. Subunits NuoA, H, J, K, L, M, N constitute the membrane sector of the complex.

It localises to the cell inner membrane. The catalysed reaction is a quinone + NADH + 5 H(+)(in) = a quinol + NAD(+) + 4 H(+)(out). NDH-1 shuttles electrons from NADH, via FMN and iron-sulfur (Fe-S) centers, to quinones in the respiratory chain. The immediate electron acceptor for the enzyme in this species is believed to be ubiquinone. Couples the redox reaction to proton translocation (for every two electrons transferred, four hydrogen ions are translocated across the cytoplasmic membrane), and thus conserves the redox energy in a proton gradient. This chain is NADH-quinone oxidoreductase subunit N, found in Nitrosomonas europaea (strain ATCC 19718 / CIP 103999 / KCTC 2705 / NBRC 14298).